The following is a 222-amino-acid chain: Ras-related protein Rab11C (222 aa).

GTP is bound at residue 22–29; sequence GDSAVGKT. Residues 44 to 52 carry the Effector region motif; sequence SKATIGVEF. GTP-binding positions include 70-74 and 128-131; these read DTAGQ and NKTD. 2 S-geranylgeranyl cysteine lipidation sites follow: Cys-219 and Cys-220.

It belongs to the small GTPase superfamily. Rab family.

It localises to the cell membrane. This Nicotiana tabacum (Common tobacco) protein is Ras-related protein Rab11C (RAB11C).